The chain runs to 381 residues: Heme A synthase (381 aa).

The interval 1 to 28 (MSNRTIFEEVSSDSKQQSSPTPGGIDRK) is disordered. 8 consecutive transmembrane segments (helical) span residues 36 to 56 (IRVWLAVLFALVVAMIAVGGL), 125 to 145 (VIGLIWALGFFGFLVTRSIPT), 151 to 171 (LLLPGILGGVQGAIGWWMVAS), 187 to 207 (LATHLGLAFVILGFLAWYMFL), 230 to 250 (STGLLHFAFLQILLGALVAGI), 287 to 307 (LVQFIHRVAGYLLFAFAVVVW), 320 to 340 (FAFNAVFAALSLQLVIGIVTV), and 344 to 364 (APVEIAIVHQAVAVLVWVLIL). His-292 serves as a coordination point for heme. Position 352 (His-352) interacts with heme.

Belongs to the COX15/CtaA family. Type 2 subfamily. Interacts with CtaB. Requires heme b as cofactor.

Its subcellular location is the cell membrane. The catalysed reaction is Fe(II)-heme o + 2 A + H2O = Fe(II)-heme a + 2 AH2. It functions in the pathway porphyrin-containing compound metabolism; heme A biosynthesis; heme A from heme O: step 1/1. Catalyzes the conversion of heme O to heme A by two successive hydroxylations of the methyl group at C8. The first hydroxylation forms heme I, the second hydroxylation results in an unstable dihydroxymethyl group, which spontaneously dehydrates, resulting in the formyl group of heme A. The protein is Heme A synthase of Ruegeria sp. (strain TM1040) (Silicibacter sp.).